We begin with the raw amino-acid sequence, 342 residues long: Succinylglutamate desuccinylase (342 aa).

Residues histidine 63, glutamate 66, and histidine 155 each contribute to the Zn(2+) site. The active site involves glutamate 219.

Belongs to the AspA/AstE family. Succinylglutamate desuccinylase subfamily. Requires Zn(2+) as cofactor.

The catalysed reaction is N-succinyl-L-glutamate + H2O = L-glutamate + succinate. It participates in amino-acid degradation; L-arginine degradation via AST pathway; L-glutamate and succinate from L-arginine: step 5/5. Functionally, transforms N(2)-succinylglutamate into succinate and glutamate. The chain is Succinylglutamate desuccinylase from Vibrio cholerae serotype O1 (strain ATCC 39315 / El Tor Inaba N16961).